The following is a 275-amino-acid chain: Glutamate racemase (275 aa).

Residues D22–S23 and Y54–G55 each bind substrate. C85 acts as the Proton donor/acceptor in catalysis. N86 to T87 lines the substrate pocket. The active-site Proton donor/acceptor is C196. Residue T197–H198 participates in substrate binding.

Belongs to the aspartate/glutamate racemases family.

The catalysed reaction is L-glutamate = D-glutamate. It participates in cell wall biogenesis; peptidoglycan biosynthesis. Its function is as follows. Provides the (R)-glutamate required for cell wall biosynthesis. In Pseudomonas syringae pv. tomato (strain ATCC BAA-871 / DC3000), this protein is Glutamate racemase.